Reading from the N-terminus, the 785-residue chain is Protein kintoun (785 aa).

Basic and acidic residues-rich tracts occupy residues 622 to 638 (EHNEQCTDHSESERDTS) and 662 to 679 (HNIELGREHTSERDKEPK). Disordered stretches follow at residues 622 to 698 (EHNE…DSHL) and 719 to 749 (KSSVQTTQESDLDEDDMPDNSDHLQNSASSN). Over residues 681–695 (TSCTAESTSGQQPND) the composition is skewed to polar residues. Residues 728–737 (SDLDEDDMPD) are compositionally biased toward acidic residues.

It belongs to the PIH1 family. Kintoun subfamily.

It localises to the cytoplasm. It is found in the dynein axonemal particle. Its function is as follows. Required for cytoplasmic pre-assembly of axonemal dyneins, thereby playing a central role in motility in cilia and flagella. Involved in pre-assembly of dynein arm complexes in the cytoplasm before intraflagellar transport loads them for the ciliary compartment. This is Protein kintoun from Xenopus tropicalis (Western clawed frog).